The following is a 1650-amino-acid chain: Transmembrane domain-containing protein DDB_G0287209 (1650 aa).

A coiled-coil region spans residues 194–225 (NNNNNNFNNNNNNNNNNNNNKNNYNNNKSNLI). Disordered regions lie at residues 197–216 (NNNF…NKNN) and 1218–1296 (ENQF…NINN). The segment covering 1224 to 1284 (NNNENSGSSG…SNSNENNYNG (61 aa)) has biased composition (low complexity). Transmembrane regions (helical) follow at residues 1314-1334 (PLLL…LSLF), 1347-1369 (ILFL…LQLF), 1390-1410 (ISIS…DVTS), 1454-1474 (WNIY…LIVP), 1489-1509 (ILFI…VILF), 1515-1535 (WWDL…VTLL), 1539-1559 (PVYF…QFAF), 1570-1590 (VENL…TSII), and 1595-1615 (FNLI…ITII).

It localises to the membrane. In Dictyostelium discoideum (Social amoeba), this protein is Transmembrane domain-containing protein DDB_G0287209.